The following is a 703-amino-acid chain: Glycogen [starch] synthase, liver (703 aa).

The residue at position 8 (serine 8) is a Phosphoserine; by PKA. Position 11 is a phosphoserine (serine 11). Lysine 40 serves as a coordination point for UDP. Residues histidine 205 and arginine 211 each contribute to the UDP-alpha-D-glucose site. Histidine 291, glutamate 292, glutamine 294, histidine 297, and lysine 301 together coordinate alpha-D-glucose 6-phosphate. Arginine 331 is a binding site for UDP. Arginine 331 contributes to the UDP-alpha-D-glucose binding site. Histidine 501 serves as a coordination point for alpha-D-glucose 6-phosphate. 3 residues coordinate UDP-alpha-D-glucose: glutamate 510, tryptophan 512, and glycine 513. Residue threonine 515 coordinates UDP. Residues arginine 582 and arginine 586 each coordinate alpha-D-glucose 6-phosphate. Serine 627 is modified (phosphoserine). Positions proline 628–asparagine 703 are disordered. A phosphoserine; by GSK3-alpha and GSK3-beta mark is found at serine 641, serine 645, serine 649, and serine 653. The span at serine 647–serine 657 shows a compositional bias: low complexity. The residue at position 657 (serine 657) is a Phosphoserine; by CK2. Residues aspartate 658 to alanine 674 are compositionally biased toward acidic residues. At serine 683 the chain carries Phosphoserine.

The protein belongs to the glycosyltransferase 3 family. As to quaternary structure, part of the glycogen synthase (GS)-glycogenin complex, a heterooctamer composed of a tetramer of GS and 2 dimers of glycogenin, where each GS protomer binds to one glycogenin subunit (via glycogenin C-terminus); the GS tetramer may dissociate from glycogenin dimers to continue glycogen polymerization on its own. May also form a heterooctamer complex with GYG1 (via GYG1 C-terminus). In terms of processing, primed phosphorylation at Ser-657 (site 5) by CSNK2A1 and CSNK2A2 is required for inhibitory phosphorylation at Ser-641 (site 3a), Ser-645 (site 3b), Ser-649 (site 3c) and Ser-653 (site 4) by GSK3A an GSK3B. Dephosphorylation at Ser-641 and Ser-645 by PP1 activates the enzyme. Phosphorylation at Ser-8 is not required for interaction with GYG1. Interaction with GYG1 does not regulate the phosphorylation at Ser-8 and Ser-641. As to expression, specifically expressed in liver (at protein level).

It carries out the reaction [(1-&gt;4)-alpha-D-glucosyl](n) + UDP-alpha-D-glucose = [(1-&gt;4)-alpha-D-glucosyl](n+1) + UDP + H(+). It participates in glycan biosynthesis; glycogen biosynthesis. With respect to regulation, allosteric activation by glucose-6-phosphate. Phosphorylation reduces the activity towards UDP-glucose. When in the non-phosphorylated state, glycogen synthase does not require glucose-6-phosphate as an allosteric activator; when phosphorylated it does. In terms of biological role, glycogen synthase participates in the glycogen biosynthetic process along with glycogenin and glycogen branching enzyme. Extends the primer composed of a few glucose units formed by glycogenin by adding new glucose units to it. In this context, glycogen synthase transfers the glycosyl residue from UDP-Glc to the non-reducing end of alpha-1,4-glucan. This chain is Glycogen [starch] synthase, liver, found in Homo sapiens (Human).